The chain runs to 143 residues: Large ribosomal subunit protein uL16 (143 aa).

This sequence belongs to the universal ribosomal protein uL16 family. Part of the 50S ribosomal subunit.

Functionally, binds 23S rRNA and is also seen to make contacts with the A and possibly P site tRNAs. The chain is Large ribosomal subunit protein uL16 from Oenococcus oeni (strain ATCC BAA-331 / PSU-1).